A 476-amino-acid polypeptide reads, in one-letter code: mRNA cap guanine-N(7) methyltransferase (476 aa).

The segment covering 1–14 (MANSTKAEEYEKMS) has biased composition (basic and acidic residues). Positions 1–128 (MANSTKAEEY…TGDGTQNKRK (128 aa)) are disordered. Over residues 20–50 (ASVNSEAESSFSINENTTASGTGLSGKTSVC) the composition is skewed to polar residues. Serine 24, serine 28, and serine 29 each carry phosphoserine. Composition is skewed to basic and acidic residues over residues 54–68 (DTAR…DLVK), 84–93 (LDPEIVPEEK), and 107–117 (RETEDVPKDEY). Phosphoserine is present on serine 118. Residues 126-128 (KRK) carry the Nuclear localization signal motif. The mRNA cap 0 methyltransferase domain maps to 167–475 (SRIFYLRNFN…IYLVFAFEKQ (309 aa)). 176 to 177 (NN) is an mRNA binding site. S-adenosyl-L-methionine contacts are provided by lysine 180, glycine 205, aspartate 227, aspartate 261, glutamine 284, and tyrosine 289.

Belongs to the class I-like SAM-binding methyltransferase superfamily. mRNA cap 0 methyltransferase family. As to quaternary structure, interacts with importin alpha, leading to stimulate both RNA-binding and methyltransferase activity. Interaction with importin alpha and beta is required for its nuclear localization, importin beta dissociating in response to RanGTP, allowing RNMT-importin alpha to bind RNA substrates. Interacts with elongating form of polymerase II and RNGTT. Interacts with RAMAC, this interaction significantly enhances RNA-binding and cap methyltransferase activity.

Its subcellular location is the nucleus. It catalyses the reaction a 5'-end (5'-triphosphoguanosine)-ribonucleoside in mRNA + S-adenosyl-L-methionine = a 5'-end (N(7)-methyl 5'-triphosphoguanosine)-ribonucleoside in mRNA + S-adenosyl-L-homocysteine. Methyltransferase activity is activated by RAMAC. In terms of biological role, catalytic subunit of the mRNA-capping methyltransferase RNMT:RAMAC complex that methylates the N7 position of the added guanosine to the 5'-cap structure of mRNAs. Binds RNA containing 5'-terminal GpppC. In Macaca fascicularis (Crab-eating macaque), this protein is mRNA cap guanine-N(7) methyltransferase (RNMT).